Here is a 300-residue protein sequence, read N- to C-terminus: MKSQGRPLPSVAEQFKARLPVYIGLTRLNRPIGTYLLLWPTLWALWLASEGAPSLKNLFIFVFGVLLMRSAGCVINDYADRRIDMHVERTKGRPFAQNQVTEKEALTLFGILVGVSFILVLFTNALTIYLSAGALALASTYPFMKRHTYLPQVVLGAAFAWGIPMAFAAELDAVPQQAWLLYTATVVWTVAYDTMYAMADREDDLKIGVKSTAILFGEADRAAVAGLQVLTLGVLFMVGAQHELGVYYQVSLIIVAVLFVYQQHLIRDRSSQHCFKAFLNNHWVGAAVFLGLVLEFLFRP.

A run of 8 helical transmembrane segments spans residues 32–52, 55–75, 108–128, 149–169, 178–198, 222–242, 246–266, and 278–298; these read IGTYLLLWPTLWALWLASEGA, LKNLFIFVFGVLLMRSAGCVI, LFGILVGVSFILVLFTNALTI, YLPQVVLGAAFAWGIPMAFAA, AWLLYTATVVWTVAYDTMYAM, AAVAGLQVLTLGVLFMVGAQH, VYYQVSLIIVAVLFVYQQHLI, and FLNNHWVGAAVFLGLVLEFLF.

The protein belongs to the UbiA prenyltransferase family. Requires Mg(2+) as cofactor.

It is found in the cell inner membrane. The catalysed reaction is all-trans-octaprenyl diphosphate + 4-hydroxybenzoate = 4-hydroxy-3-(all-trans-octaprenyl)benzoate + diphosphate. It functions in the pathway cofactor biosynthesis; ubiquinone biosynthesis. In terms of biological role, catalyzes the prenylation of para-hydroxybenzoate (PHB) with an all-trans polyprenyl group. Mediates the second step in the final reaction sequence of ubiquinone-8 (UQ-8) biosynthesis, which is the condensation of the polyisoprenoid side chain with PHB, generating the first membrane-bound Q intermediate 3-octaprenyl-4-hydroxybenzoate. The polypeptide is 4-hydroxybenzoate octaprenyltransferase (Hahella chejuensis (strain KCTC 2396)).